A 396-amino-acid polypeptide reads, in one-letter code: Probable sugar efflux transporter (396 aa).

The next 12 membrane-spanning stretches (helical) occupy residues 15 to 35 (VVTL…PVGL), 50 to 70 (VGIM…PFML), 81 to 101 (LICL…AWNF), 103 to 123 (VLVI…SITA), 136 to 156 (AQAL…GLPI), 169 to 189 (TFFA…KLLP), 209 to 229 (PALM…YTAY), 246 to 266 (FATV…LVFG), 275 to 295 (LLVS…LPAA), 301 to 321 (LALL…GMQV), 333 to 353 (VAMA…ALAG), and 364 to 384 (TIGY…VLIF).

This sequence belongs to the major facilitator superfamily. SotB (TC 2.A.1.2) family.

It localises to the cell inner membrane. Functionally, involved in the efflux of sugars. The physiological role may be the reduction of the intracellular concentration of toxic sugars or sugar metabolites. In Salmonella arizonae (strain ATCC BAA-731 / CDC346-86 / RSK2980), this protein is Probable sugar efflux transporter.